The sequence spans 137 residues: Cell division protein SepF (137 aa).

It belongs to the SepF family. As to quaternary structure, homodimer. Interacts with FtsZ.

It is found in the cytoplasm. In terms of biological role, cell division protein that is part of the divisome complex and is recruited early to the Z-ring. Probably stimulates Z-ring formation, perhaps through the cross-linking of FtsZ protofilaments. Its function overlaps with FtsA. The polypeptide is Cell division protein SepF (Thermoanaerobacter pseudethanolicus (strain ATCC 33223 / 39E) (Clostridium thermohydrosulfuricum)).